Reading from the N-terminus, the 1109-residue chain is Carbamoyl phosphate synthase large chain (1109 aa).

The carboxyphosphate synthetic domain stretch occupies residues M1–D402. ATP is bound by residues R129, R169, G175, G176, E208, I210, E215, G241, V242, H243, Q285, and E299. Residues K133 to V328 enclose the ATP-grasp 1 domain. 3 residues coordinate Mg(2+): Q285, E299, and N301. Mn(2+)-binding residues include Q285, E299, and N301. The interval K403–T548 is oligomerization domain. Positions E549 to Y956 are carbamoyl phosphate synthetic domain. An ATP-grasp 2 domain is found at G678–A876. ATP is bound by residues R714, R760, L762, E767, G792, I793, H794, S795, Q835, and E847. Q835, E847, and N849 together coordinate Mg(2+). The Mn(2+) site is built by Q835, E847, and N849. The region spanning G957 to R1102 is the MGS-like domain. The allosteric domain stretch occupies residues G957–A1109.

This sequence belongs to the CarB family. In terms of assembly, composed of two chains; the small (or glutamine) chain promotes the hydrolysis of glutamine to ammonia, which is used by the large (or ammonia) chain to synthesize carbamoyl phosphate. Tetramer of heterodimers (alpha,beta)4. Mg(2+) serves as cofactor. The cofactor is Mn(2+).

It catalyses the reaction hydrogencarbonate + L-glutamine + 2 ATP + H2O = carbamoyl phosphate + L-glutamate + 2 ADP + phosphate + 2 H(+). The catalysed reaction is hydrogencarbonate + NH4(+) + 2 ATP = carbamoyl phosphate + 2 ADP + phosphate + 2 H(+). It functions in the pathway amino-acid biosynthesis; L-arginine biosynthesis; carbamoyl phosphate from bicarbonate: step 1/1. The protein operates within pyrimidine metabolism; UMP biosynthesis via de novo pathway; (S)-dihydroorotate from bicarbonate: step 1/3. Its function is as follows. Large subunit of the glutamine-dependent carbamoyl phosphate synthetase (CPSase). CPSase catalyzes the formation of carbamoyl phosphate from the ammonia moiety of glutamine, carbonate, and phosphate donated by ATP, constituting the first step of 2 biosynthetic pathways, one leading to arginine and/or urea and the other to pyrimidine nucleotides. The large subunit (synthetase) binds the substrates ammonia (free or transferred from glutamine from the small subunit), hydrogencarbonate and ATP and carries out an ATP-coupled ligase reaction, activating hydrogencarbonate by forming carboxy phosphate which reacts with ammonia to form carbamoyl phosphate. The protein is Carbamoyl phosphate synthase large chain of Beutenbergia cavernae (strain ATCC BAA-8 / DSM 12333 / CCUG 43141 / JCM 11478 / NBRC 16432 / NCIMB 13614 / HKI 0122).